Consider the following 345-residue polypeptide: Phosphoribosylformylglycinamidine cyclo-ligase (345 aa).

It belongs to the AIR synthase family.

Its subcellular location is the cytoplasm. The catalysed reaction is 2-formamido-N(1)-(5-O-phospho-beta-D-ribosyl)acetamidine + ATP = 5-amino-1-(5-phospho-beta-D-ribosyl)imidazole + ADP + phosphate + H(+). Its pathway is purine metabolism; IMP biosynthesis via de novo pathway; 5-amino-1-(5-phospho-D-ribosyl)imidazole from N(2)-formyl-N(1)-(5-phospho-D-ribosyl)glycinamide: step 2/2. The sequence is that of Phosphoribosylformylglycinamidine cyclo-ligase from Escherichia coli (strain K12 / MC4100 / BW2952).